Reading from the N-terminus, the 144-residue chain is Small ribosomal subunit protein uS11 (144 aa).

Positions 123 to 144 (EDVTPVPTDSTRRKGSRRGRRL) are disordered. Residues 135–144 (RKGSRRGRRL) show a composition bias toward basic residues.

It belongs to the universal ribosomal protein uS11 family.

The sequence is that of Small ribosomal subunit protein uS11 (RPS14) from Trypanosoma brucei brucei.